The chain runs to 444 residues: Tubulin gamma chain (444 aa).

144 to 150 is a binding site for GTP; the sequence is SGGTGSG.

Belongs to the tubulin family.

It is found in the cytoplasm. It localises to the cytoskeleton. Its subcellular location is the microtubule organizing center. The protein resides in the centrosome. The protein localises to the cell junction. It is found in the hemidesmosome. It localises to the adherens junction. In terms of biological role, tubulin is the major constituent of microtubules. The gamma chain is found at microtubule organizing centers (MTOC) such as the spindle poles or the centrosome, suggesting that it is involved in the minus-end nucleation of microtubule assembly. This Caenorhabditis elegans protein is Tubulin gamma chain (tbg-1).